The sequence spans 341 residues: NADH-quinone oxidoreductase subunit H 2 (341 aa).

The next 8 membrane-spanning stretches (helical) occupy residues 13–33, 82–102, 115–135, 161–181, 190–210, 248–268, 277–297, and 317–337; these read IIVI…IAYI, GVFL…WAVI, VGVL…IMAG, IGFV…TAIV, MLGW…VSAL, YVAI…GWLP, WVPG…LFAM, and VFLP…QFAG.

Belongs to the complex I subunit 1 family. In terms of assembly, NDH-1 is composed of 14 different subunits. Subunits NuoA, H, J, K, L, M, N constitute the membrane sector of the complex.

Its subcellular location is the cell inner membrane. The enzyme catalyses a quinone + NADH + 5 H(+)(in) = a quinol + NAD(+) + 4 H(+)(out). In terms of biological role, NDH-1 shuttles electrons from NADH, via FMN and iron-sulfur (Fe-S) centers, to quinones in the respiratory chain. The immediate electron acceptor for the enzyme in this species is believed to be ubiquinone. Couples the redox reaction to proton translocation (for every two electrons transferred, four hydrogen ions are translocated across the cytoplasmic membrane), and thus conserves the redox energy in a proton gradient. This subunit may bind ubiquinone. The protein is NADH-quinone oxidoreductase subunit H 2 of Rhodopseudomonas palustris (strain BisB5).